A 463-amino-acid polypeptide reads, in one-letter code: Dialkyldecalin synthase (463 aa).

Residues V13, 32–33 (ER), I121, and D275 each bind FAD.

This sequence belongs to the PheA/TfdB FAD monooxygenase family. As to quaternary structure, homodimer. FAD is required as a cofactor.

The enzyme catalyses 4-[(2E,7S,8E,10E,13R,14R,16E,18E)-14-ethyl-7,13-dihydroxy-2,16,18-trimethylicosa-2,8,10,16,18-pentaenoyl]-2-methylidene-5-oxo-2,5-dihydro-1H-pyrrol-3-olate = 4-[(1R,2R,4aS,5S,8aR)-2-[(2R,3R,5E,7E)-3-ethyl-2-hydroxy-5,7-dimethylnona-5,7-dien-1-yl]-5-hydroxy-1-methyl-1,2,4a,5,6,7,8,8a-octahydronaphthalene-1-carbonyl]-2-methylidene-5-oxo-2,5-dihydro-1H-pyrrol-3-olate. Its pathway is antibiotic biosynthesis. Functionally, involved in the biosynthesis of the spirotetramate antibiotics pyrroindomycins. Catalyzes the intramolecular cyclization forming the dialkyldecalin moiety in pyrroindomycins, via an endo-selective [4+2] cycloaddition reaction. The chain is Dialkyldecalin synthase from Streptomyces rugosporus.